Consider the following 1054-residue polypeptide: Bifunctional cytochrome P450/NADPH--P450 reductase 2 (1054 aa).

The cytochrome P450 stretch occupies residues 1–475 (MKQASAIPQP…QADIKAETKP (475 aa)). Residue Cys403 coordinates heme. Over residues 462–480 (QRKEQADIKAETKPKETKP) the composition is skewed to basic and acidic residues. Residues 462-482 (QRKEQADIKAETKPKETKPKH) are disordered. The NADPH--P450 reductase stretch occupies residues 476-1053 (KETKPKHGTP…RRYVKDVWTG (578 aa)). The Flavodoxin-like domain occupies 486–625 (LLVLFGSNLG…HRESWENRFW (140 aa)). FMN contacts are provided by residues 492–497 (SNLGTA), 539–542 (SYNG), 573–575 (CGN), and 581–583 (TYQ). The region spanning 663-896 (YGAFEGIVLE…RTPQSGFQMP (234 aa)) is the FAD-binding FR-type domain.

This sequence in the N-terminal section; belongs to the cytochrome P450 family. FAD serves as cofactor. It depends on FMN as a cofactor. Heme b is required as a cofactor.

Its subcellular location is the cytoplasm. It carries out the reaction an organic molecule + reduced [NADPH--hemoprotein reductase] + O2 = an alcohol + oxidized [NADPH--hemoprotein reductase] + H2O + H(+). The enzyme catalyses 2 oxidized [cytochrome P450] + NADPH = 2 reduced [cytochrome P450] + NADP(+) + H(+). Functions as a fatty acid monooxygenase. Catalyzes hydroxylation of a range of medium to long-chain fatty acids, with a preference for long-chain unsaturated and branched-chain fatty acids over saturated fatty acids. Hydroxylation of myristic acid occurs mainly at the omega-2 and omega-3 positions, in approximately equal proportions. Also displays a NADPH-dependent reductase activity in the C-terminal domain, which allows electron transfer from NADPH to the heme iron of the cytochrome P450 N-terminal domain. The sequence is that of Bifunctional cytochrome P450/NADPH--P450 reductase 2 from Bacillus subtilis (strain 168).